Here is a 433-residue protein sequence, read N- to C-terminus: UDP-N-acetylmuramate--L-alanine ligase (433 aa).

108–114 (GAHGKTS) is a binding site for ATP.

This sequence belongs to the MurCDEF family.

It is found in the cytoplasm. It carries out the reaction UDP-N-acetyl-alpha-D-muramate + L-alanine + ATP = UDP-N-acetyl-alpha-D-muramoyl-L-alanine + ADP + phosphate + H(+). It participates in cell wall biogenesis; peptidoglycan biosynthesis. Functionally, cell wall formation. The chain is UDP-N-acetylmuramate--L-alanine ligase from Anoxybacillus flavithermus (strain DSM 21510 / WK1).